Reading from the N-terminus, the 30-residue chain is Ornithine carbamoyltransferase, catabolic (30 aa).

It belongs to the aspartate/ornithine carbamoyltransferase superfamily. OTCase family.

Its subcellular location is the cytoplasm. The enzyme catalyses carbamoyl phosphate + L-ornithine = L-citrulline + phosphate + H(+). The protein operates within amino-acid degradation; L-arginine degradation via ADI pathway; carbamoyl phosphate from L-arginine: step 2/2. This chain is Ornithine carbamoyltransferase, catabolic (arcB), found in Aeromonas caviae (Aeromonas punctata).